The primary structure comprises 511 residues: GMP synthase [glutamine-hydrolyzing] (511 aa).

One can recognise a Glutamine amidotransferase type-1 domain in the interval 5-195 (AILVLDFGSQ…VFKICQAQIN (191 aa)). Cys-82 acts as the Nucleophile in catalysis. Active-site residues include His-169 and Glu-171. The 191-residue stretch at 196 to 386 (WSLEGNLETI…LGIKKESLYR (191 aa)) folds into the GMPS ATP-PPase domain. 223 to 229 (SGGTDSL) contacts ATP.

Homodimer.

The catalysed reaction is XMP + L-glutamine + ATP + H2O = GMP + L-glutamate + AMP + diphosphate + 2 H(+). The protein operates within purine metabolism; GMP biosynthesis; GMP from XMP (L-Gln route): step 1/1. Its function is as follows. Catalyzes the synthesis of GMP from XMP. This chain is GMP synthase [glutamine-hydrolyzing] (guaA), found in Borreliella burgdorferi (strain N40) (Borrelia burgdorferi).